We begin with the raw amino-acid sequence, 453 residues long: Ezy-1 protein (453 aa).

An N-terminal signal peptide occupies residues Met1–Ala28. 3 disordered regions span residues Ser167–Gly187, Thr272–Gly307, and Ser412–Met453. Over residues Ala279–Val300 the composition is skewed to acidic residues. Residues Asp415–Glu425 are compositionally biased toward basic and acidic residues.

In Chlamydomonas reinhardtii (Chlamydomonas smithii), this protein is Ezy-1 protein (Ezy-1).